A 181-amino-acid chain; its full sequence is MKKWRFLGIDDSFDDRKCCVVGCVTCGGYVEGFLYTEIDIDGLDATDKLISMVRRSKFREQIKCIFLPGITLGGFNLVDIQRVYRETKIPVVVVMRRKPDMEEFDSAMRNLENYELRRKIVEVAGEIHRIGDIYIQTAGLTPSEAEKLVKASLIKGNMPEPVRISHLVASAIIHGESRGKA.

The protein belongs to the UPF0215 family.

The polypeptide is UPF0215 protein AF_1433 (Archaeoglobus fulgidus (strain ATCC 49558 / DSM 4304 / JCM 9628 / NBRC 100126 / VC-16)).